Consider the following 81-residue polypeptide: Acyl carrier protein (81 aa).

Positions 2–77 (ASVEEKVKQI…DAVDYITAHA (76 aa)) constitute a Carrier domain. The residue at position 37 (Ser37) is an O-(pantetheine 4'-phosphoryl)serine.

The protein belongs to the acyl carrier protein (ACP) family. 4'-phosphopantetheine is transferred from CoA to a specific serine of apo-ACP by AcpS. This modification is essential for activity because fatty acids are bound in thioester linkage to the sulfhydryl of the prosthetic group.

The protein resides in the cytoplasm. The protein operates within lipid metabolism; fatty acid biosynthesis. Carrier of the growing fatty acid chain in fatty acid biosynthesis. In Koribacter versatilis (strain Ellin345), this protein is Acyl carrier protein.